We begin with the raw amino-acid sequence, 1848 residues long: Unconventional myosin-Vb (1848 aa).

Position 1 is an N-acetylmethionine (methionine 1). The Myosin N-terminal SH3-like domain occupies 8–60 (SQCTRVWIPDPDEVWRSAELTKDYKEGDKSLQLRLEDETILEYPIDVQRNQLP). Residues 21–40 (VWRSAELTKDYKEGDKSLQL) form a requires for interaction with LIMA1 region. The Myosin motor domain maps to 69–761 (VGENDLTALS…QVAYLEKLRA (693 aa)). 163 to 170 (GESGAGKT) is an ATP binding site. The interval 596–630 (KDPVPATTPGKGSSSKISVRSARPPMKVSNKEHKK) is disordered. The interval 640 to 662 (LHLLMETLNATTPHYVRCIKPND) is actin-binding. 6 IQ domains span residues 769-798 (IMIQKTVRGWLQKVKYHRLKGATLTLQRYC), 792-821 (LTLQRYCRGHLARRLAEHLRRIRAAVVLQK), 817-848 (VVLQKHYRMQRARQAYQRVRRAAVVIQAFTRA), 840-869 (VVIQAFTRAMFVRRTYRQVLMEHKATTIQK), 865-896 (TTIQKHVRGWMARRHFQRLRDAAIVIQCAFRM), and 888-917 (IVIQCAFRMLKARRELKALRIEARSAEHLK). Coiled coils occupy residues 899 to 1266 (ARRE…ILRT) and 1341 to 1471 (RLLE…GMLE). 2 disordered regions span residues 1093 to 1123 (QTPGHRRNPSNQSSLESDSNYPSISTSEIGD) and 1166 to 1192 (QLEKREQQDSKKVQAEPPQTDIDLDPN). Residues 1101-1121 (PSNQSSLESDSNYPSISTSEI) are compositionally biased toward polar residues. The segment covering 1166 to 1179 (QLEKREQQDSKKVQ) has biased composition (basic and acidic residues). Phosphoserine is present on serine 1446. Positions 1526–1803 (TSTINGIKKV…IRTIQAQLQE (278 aa)) constitute a Dilute domain.

The protein belongs to the TRAFAC class myosin-kinesin ATPase superfamily. Myosin family. Component of the CART complex, at least composed of ACTN4, HGS/HRS, MYO5B and TRIM3. Interacts with RAB11FIP2, RAB11A, and RAB8A. Found in a complex with CFTR and RAB11A. Interacts with NPC1L1;. Interacts with LIMA1.

The protein resides in the cytoplasm. May be involved in vesicular trafficking via its association with the CART complex. The CART complex is necessary for efficient transferrin receptor recycling but not for EGFR degradation. Required in a complex with RAB11A and RAB11FIP2 for the transport of NPC1L1 to the plasma membrane. Together with RAB11A participates in CFTR trafficking to the plasma membrane and TF (transferrin) recycling in nonpolarized cells. Together with RAB11A and RAB8A participates in epithelial cell polarization. Together with RAB25 regulates transcytosis. Required for proper localization of bile salt export pump ABCB11 at the apical/canalicular plasma membrane of hepatocytes. This is Unconventional myosin-Vb (MYO5B) from Homo sapiens (Human).